Reading from the N-terminus, the 174-residue chain is Regenerating islet-derived protein 3-gamma (174 aa).

An N-terminal signal peptide occupies residues 1–26 (MLPRVALTTMSWMLLSSLMLLSQVQG). Residues 27 to 37 (EDAKEDVPTSR) constitute a propeptide that is removed on maturation. Intrachain disulfides connect Cys40/Cys51, Cys68/Cys170, and Cys145/Cys162. A C-type lectin domain is found at 47-171 (YGSYCYALFS…CISELPYVCK (125 aa)). The segment at 103–118 (WIGLHDPTLGQEPNRG) is sufficient to activate EXTL3. Zn(2+) is bound at residue His107. The short motif at 114–116 (EPN) is the EPN element. Positions 121 and 144 each coordinate Zn(2+).

As to quaternary structure, forms a hexameric membrane-permeabilizing oligomeric pore on membrane phospholipids. The hexamer is formed by three dimers related by helical symmetry. Forms filaments, filamentation traps pore complexes and limits damage to host cells. Interacts with EXTL3. Proteolytic processing by trypsin removes an inhibitory N-terminal propeptide and is essential for peptidoglycan binding and antibacterial activity. In terms of tissue distribution, expressed in injured skeletal muscles and sciatic nerve (at protein level). Expressed in the pancreas. Expression increases during the acute phase of pancreatitis.

Its subcellular location is the secreted. It is found in the cytoplasm. Lipopolysaccharide inhibits pore-forming activity, explaining why is bactericidal for Gram-positive but not Gram-negative bacteria. Functionally, bactericidal C-type lectin which acts exclusively against Gram-positive bacteria and mediates bacterial killing by binding to surface-exposed carbohydrate moieties of peptidoglycan. Restricts bacterial colonization of the intestinal epithelial surface and consequently limits activation of adaptive immune responses by the microbiota. Acts as a hormone in response to different stimuli like anti-inflammatory signals, such as IL17A, or gut microbiome. Is secreted by different cell types to activate its receptor EXTL3 and induce cell specific signaling pathways. Induced by IL17A in keratinocytes, regulates keratinocyte proliferation and differentiation after skin injury. In parallel, inhibits skin inflammation through the inhibition of inflammatory cytokines such as IL6 and TNF. Induced by IL22 in lung epithelial cells, inhibits cytokine production and regulates allergic airway inflammation. Induced in small intestine by inulin-enriched diet and Lactobacillus gasseri enriched microbiome, plays a role in the improvement of gut barrier function, the regulation of energy balance and glucose levels. Modulates microbiota composition in duodenal contents. Produced by nociceptor in response to endotoxins, prevents endotoxic death by targeting kynurenine pathway in microglia. Its function is as follows. Has bacteriostatic activity. In terms of biological role, has bactericidal activity against L.monocytogenes and methicillin-resistant S.aureus. The chain is Regenerating islet-derived protein 3-gamma from Rattus norvegicus (Rat).